The chain runs to 120 residues: DNA-binding protein HQ_1105A (120 aa).

The tract at residues 1–55 (MSETPDDLDELRQQRMEELRDQADGQQSQTSDNTAAAQEAAREKAEAQQEALLKQ) is disordered. Residues 10–23 (ELRQQRMEELRDQA) are compositionally biased toward basic and acidic residues. The segment covering 24 to 34 (DGQQSQTSDNT) has biased composition (polar residues).

This sequence belongs to the PDCD5 family.

This chain is DNA-binding protein HQ_1105A, found in Haloquadratum walsbyi (strain DSM 16790 / HBSQ001).